An 80-amino-acid chain; its full sequence is Exodeoxyribonuclease 7 small subunit (80 aa).

It belongs to the XseB family. In terms of assembly, heterooligomer composed of large and small subunits.

Its subcellular location is the cytoplasm. The enzyme catalyses Exonucleolytic cleavage in either 5'- to 3'- or 3'- to 5'-direction to yield nucleoside 5'-phosphates.. In terms of biological role, bidirectionally degrades single-stranded DNA into large acid-insoluble oligonucleotides, which are then degraded further into small acid-soluble oligonucleotides. This chain is Exodeoxyribonuclease 7 small subunit, found in Vibrio vulnificus (strain CMCP6).